The sequence spans 68 residues: Protein SlyX homolog (68 aa).

It belongs to the SlyX family.

In Pseudomonas fluorescens (strain ATCC BAA-477 / NRRL B-23932 / Pf-5), this protein is Protein SlyX homolog.